Here is an 848-residue protein sequence, read N- to C-terminus: Beta-galactosidase 13 (848 aa).

The N-terminal stretch at 1–27 (MKIHSSDHSWLLLAVLVILLSFSGALS) is a signal peptide. N107 is a glycosylation site (N-linked (GlcNAc...) asparagine). E200 serves as the catalytic Proton donor. The Nucleophile role is filled by E271. N-linked (GlcNAc...) asparagine glycosylation is found at N272, N303, N376, N398, N782, N787, and N817. Residues 754–843 (DDVHLTANLK…KKLAVQVKCG (90 aa)) enclose the SUEL-type lectin domain.

It belongs to the glycosyl hydrolase 35 family. In terms of tissue distribution, ubiquitous, with higher expression levels in roots, flowers and siliques.

It localises to the secreted. It is found in the extracellular space. The protein localises to the apoplast. The catalysed reaction is Hydrolysis of terminal non-reducing beta-D-galactose residues in beta-D-galactosides.. This is Beta-galactosidase 13 (BGAL13) from Arabidopsis thaliana (Mouse-ear cress).